Reading from the N-terminus, the 273-residue chain is 2,3,4,5-tetrahydropyridine-2,6-dicarboxylate N-succinyltransferase (273 aa).

Substrate is bound by residues R104 and D141.

It belongs to the transferase hexapeptide repeat family. In terms of assembly, homotrimer.

It localises to the cytoplasm. It catalyses the reaction (S)-2,3,4,5-tetrahydrodipicolinate + succinyl-CoA + H2O = (S)-2-succinylamino-6-oxoheptanedioate + CoA. Its pathway is amino-acid biosynthesis; L-lysine biosynthesis via DAP pathway; LL-2,6-diaminopimelate from (S)-tetrahydrodipicolinate (succinylase route): step 1/3. The chain is 2,3,4,5-tetrahydropyridine-2,6-dicarboxylate N-succinyltransferase from Blochmanniella pennsylvanica (strain BPEN).